The chain runs to 329 residues: Acrosin (329 aa).

The first 17 residues, 1-17 (MLPTAVLLVLAVSVVAR), serve as a signal peptide directing secretion. Asn19 carries N-linked (GlcNAc...) asparagine glycosylation. 6 cysteine pairs are disulfide-bonded: Cys22–Cys152, Cys26–Cys160, Cys71–Cys87, Cys175–Cys244, Cys207–Cys223, and Cys234–Cys264. One can recognise a Peptidase S1 domain in the interval 40–288 (IIGGQDAAHG…YLNWIASKIG (249 aa)). Active-site charge relay system residues include His86 and Asp140. Residue Asn208 is glycosylated (N-linked (GlcNAc...) asparagine). Residue Ser238 is the Charge relay system of the active site.

Belongs to the peptidase S1 family. Heavy chain (catalytic) and a light chain linked by two disulfide bonds. Forms a heterodimer with SERPINA5.

It catalyses the reaction Preferential cleavage: Arg-|-Xaa, Lys-|-Xaa.. Inhibited by SERPINA5. Its function is as follows. Acrosin is the major protease of mammalian spermatozoa. It is a serine protease of trypsin-like cleavage specificity, it is synthesized in a zymogen form, proacrosin and stored in the acrosome. This Ovis aries (Sheep) protein is Acrosin (ACR).